The sequence spans 157 residues: Frd operon probable iron-sulfur subunit A (157 aa).

3 4Fe-4S ferredoxin-type domains span residues 24-55 (KGFS…IHNK), 56-85 (DYYY…VVSR), and 100-133 (FKAE…CIDR). Residues Cys-34, Cys-37, Cys-42, Cys-46, Cys-65, Cys-68, Cys-71, Cys-75, Cys-107, Cys-110, Cys-119, and Cys-123 each contribute to the [4Fe-4S] cluster site.

The polypeptide is Frd operon probable iron-sulfur subunit A (Proteus vulgaris).